The following is a 217-amino-acid chain: Chorionic somatomammotropin hormone 2 (217 aa).

The signal sequence occupies residues 1 to 26; it reads MAAGSRTSLLLAFALLCLPWLQEAGA. A Zn(2+)-binding site is contributed by H44. A disulfide bridge links C79 with C191. Zn(2+) is bound at residue E200. An intrachain disulfide couples C208 to C215.

This sequence belongs to the somatotropin/prolactin family. Can be found in a monomeric as well as dimeric form.

The protein localises to the secreted. Its function is as follows. Produced only during pregnancy and is involved in stimulating lactation, fetal growth and metabolism. Does not interact with GHR but only activates PRLR through zinc-induced dimerization. The sequence is that of Chorionic somatomammotropin hormone 2 (CSH2) from Homo sapiens (Human).